Consider the following 148-residue polypeptide: Large ribosomal subunit protein uL15 (148 aa).

Basic residues predominate over residues 1-30; that stretch reads MPSRLRKTRKLRGHVSHGHGRIGKHRKHPG. The disordered stretch occupies residues 1 to 37; that stretch reads MPSRLRKTRKLRGHVSHGHGRIGKHRKHPGGRGNAGG. At His-39 the chain carries (3S)-3-hydroxyhistidine. Lys-47 and Lys-55 each carry N6-acetyllysine. Position 68 is a phosphoserine (Ser-68). Lys-110 carries the post-translational modification N6-acetyllysine.

It belongs to the universal ribosomal protein uL15 family. As to quaternary structure, component of the large ribosomal subunit. Hydroxylated on His-39 by MINA.

It is found in the cytoplasm. Component of the large ribosomal subunit. The ribosome is a large ribonucleoprotein complex responsible for the synthesis of proteins in the cell. This chain is Large ribosomal subunit protein uL15 (Rpl27a), found in Mus musculus (Mouse).